The primary structure comprises 422 residues: Phosphoribosylamine--glycine ligase (422 aa).

An ATP-grasp domain is found at 107–313; it reads KDLMKKYDIP…LVQVLLDLLD (207 aa). An ATP-binding site is contributed by 133 to 194; it reads VQEKGAPIVI…EEYLSGEEFS (62 aa). Mg(2+)-binding residues include E283 and N285.

It belongs to the GARS family. The cofactor is Mg(2+). Mn(2+) serves as cofactor.

The enzyme catalyses 5-phospho-beta-D-ribosylamine + glycine + ATP = N(1)-(5-phospho-beta-D-ribosyl)glycinamide + ADP + phosphate + H(+). It participates in purine metabolism; IMP biosynthesis via de novo pathway; N(1)-(5-phospho-D-ribosyl)glycinamide from 5-phospho-alpha-D-ribose 1-diphosphate: step 2/2. This chain is Phosphoribosylamine--glycine ligase, found in Bacillus subtilis (strain 168).